The primary structure comprises 830 residues: ATP-dependent DNA helicase chl-1 (830 aa).

The Helicase ATP-binding domain occupies 1-403 (MDEFSFPFQP…HNLLYMKQLE (403 aa)). 35–42 (SPTGTGKS) is a binding site for ATP. 2 stretches are compositionally biased toward basic and acidic residues: residues 124 to 140 (GMVE…RDTD) and 157 to 168 (NDEKSEKQRDSD). The tract at residues 124–173 (GMVEVSRKRKAPARDTDQFLEPQDEAAPSEEYNNDEKSEKQRDSDFFDDV) is disordered. Residues Cys-222, Cys-240, Cys-272, and Cys-308 each contribute to the [4Fe-4S] cluster site. A DEAH box motif is present at residues 351 to 354 (DEAH).

Belongs to the DEAD box helicase family. DEAH subfamily. DDX11/CHL1 sub-subfamily. [4Fe-4S] cluster is required as a cofactor.

It is found in the nucleus. It catalyses the reaction Couples ATP hydrolysis with the unwinding of duplex DNA at the replication fork by translocating in the 5'-3' direction. This creates two antiparallel DNA single strands (ssDNA). The leading ssDNA polymer is the template for DNA polymerase III holoenzyme which synthesizes a continuous strand.. It carries out the reaction ATP + H2O = ADP + phosphate + H(+). Required for normal cell proliferation and chromosome stability. Plays a role in DNA repair during replication. The sequence is that of ATP-dependent DNA helicase chl-1 from Caenorhabditis elegans.